The primary structure comprises 290 residues: Protein CREG2 (290 aa).

An N-terminal signal peptide occupies residues 1–31; it reads MSVRRGRRPARPGTRLSWLLCCSALLSPAAG. Residues asparagine 165 and asparagine 166 are each glycosylated (N-linked (GlcNAc...) asparagine).

The protein belongs to the CREG family. In terms of processing, it is not sure whether N-glycosylation is on Asn-165 and/or Asn-166. Brain specific mainly in the limbic system and faintly in the spinal cord but not in cerebellum.

The protein localises to the secreted. The polypeptide is Protein CREG2 (CREG2) (Homo sapiens (Human)).